The following is a 131-amino-acid chain: Probable flagellum biosynthesis repressor protein FlbT (131 aa).

This sequence belongs to the FlbT family.

Has a post-transcriptional repressor function in flagellum biogenesis. Associates with the 5'-UTR of fljK mRNA and promotes its degradation. The protein is Probable flagellum biosynthesis repressor protein FlbT of Caulobacter sp. (strain K31).